The primary structure comprises 118 residues: Large ribosomal subunit protein uL18 (118 aa).

This sequence belongs to the universal ribosomal protein uL18 family. As to quaternary structure, part of the 50S ribosomal subunit; part of the 5S rRNA/L5/L18/L25 subcomplex. Contacts the 5S and 23S rRNAs.

In terms of biological role, this is one of the proteins that bind and probably mediate the attachment of the 5S RNA into the large ribosomal subunit, where it forms part of the central protuberance. This is Large ribosomal subunit protein uL18 from Parvibaculum lavamentivorans (strain DS-1 / DSM 13023 / NCIMB 13966).